The chain runs to 154 residues: UPF0225 protein Asuc_0343 (154 aa).

The protein belongs to the UPF0225 family.

This is UPF0225 protein Asuc_0343 from Actinobacillus succinogenes (strain ATCC 55618 / DSM 22257 / CCUG 43843 / 130Z).